A 112-amino-acid chain; its full sequence is Large ribosomal subunit protein uL18 (112 aa).

Belongs to the universal ribosomal protein uL18 family. Part of the 50S ribosomal subunit; part of the 5S rRNA/L5/L18/L25 subcomplex. Contacts the 5S and 23S rRNAs.

This is one of the proteins that bind and probably mediate the attachment of the 5S RNA into the large ribosomal subunit, where it forms part of the central protuberance. The protein is Large ribosomal subunit protein uL18 of Deinococcus deserti (strain DSM 17065 / CIP 109153 / LMG 22923 / VCD115).